Reading from the N-terminus, the 90-residue chain is Acylphosphatase (90 aa).

An Acylphosphatase-like domain is found at 4 to 90 (TVHLRITGHV…KGQYKDFRIY (87 aa)). Active-site residues include R19 and N37.

This sequence belongs to the acylphosphatase family.

The catalysed reaction is an acyl phosphate + H2O = a carboxylate + phosphate + H(+). In Caldanaerobacter subterraneus subsp. tengcongensis (strain DSM 15242 / JCM 11007 / NBRC 100824 / MB4) (Thermoanaerobacter tengcongensis), this protein is Acylphosphatase (acyP).